We begin with the raw amino-acid sequence, 123 residues long: Probable ketoamine kinase in tonB 3'region (123 aa).

The active-site Proton acceptor is D26.

The protein belongs to the fructosamine kinase family.

Functionally, ketoamine kinase that phosphorylates ketoamines on the third carbon of the sugar moiety to generate ketoamine 3-phosphate. This is Probable ketoamine kinase in tonB 3'region from Klebsiella pneumoniae.